Reading from the N-terminus, the 400-residue chain is Enoyl-[acyl-carrier-protein] reductase [NADH] (400 aa).

NAD(+) contacts are provided by residues 48-53 (GSSSGY), 74-75 (FE), 111-112 (DA), and 139-140 (LA). Tyr225 is a substrate binding site. The active-site Proton donor is the Tyr235. NAD(+) contacts are provided by residues Lys244 and 273–275 (VVT).

Belongs to the TER reductase family. As to quaternary structure, monomer.

The catalysed reaction is a 2,3-saturated acyl-[ACP] + NAD(+) = a (2E)-enoyl-[ACP] + NADH + H(+). The protein operates within lipid metabolism; fatty acid biosynthesis. Its function is as follows. Involved in the final reduction of the elongation cycle of fatty acid synthesis (FAS II). Catalyzes the reduction of a carbon-carbon double bond in an enoyl moiety that is covalently linked to an acyl carrier protein (ACP). The sequence is that of Enoyl-[acyl-carrier-protein] reductase [NADH] from Shewanella piezotolerans (strain WP3 / JCM 13877).